Reading from the N-terminus, the 585-residue chain is Arginine--tRNA ligase (585 aa).

A 'HIGH' region motif is present at residues 131 to 141 (ANPTGPMHVGH).

This sequence belongs to the class-I aminoacyl-tRNA synthetase family. In terms of assembly, monomer.

It is found in the cytoplasm. The catalysed reaction is tRNA(Arg) + L-arginine + ATP = L-arginyl-tRNA(Arg) + AMP + diphosphate. The protein is Arginine--tRNA ligase of Bartonella bacilliformis (strain ATCC 35685 / KC583 / Herrer 020/F12,63).